The primary structure comprises 93 residues: Small ribosomal subunit protein bS16 (93 aa).

Belongs to the bacterial ribosomal protein bS16 family.

The chain is Small ribosomal subunit protein bS16 from Opitutus terrae (strain DSM 11246 / JCM 15787 / PB90-1).